A 93-amino-acid polypeptide reads, in one-letter code: UPF0358 protein YlaN (93 aa).

Belongs to the UPF0358 family.

Its function is as follows. Essential for cell growth and for normal cell shape. The chain is UPF0358 protein YlaN (ylaN) from Bacillus subtilis (strain 168).